A 360-amino-acid polypeptide reads, in one-letter code: Type II methyltransferase M.BglII (360 aa).

A disordered region spans residues 316–341; the sequence is TRQRKGSKPSLDSKAHPEEHHKKEIV. Basic and acidic residues predominate over residues 326 to 341; the sequence is LDSKAHPEEHHKKEIV.

Belongs to the N(4)/N(6)-methyltransferase family. N(4) subfamily.

It carries out the reaction a 2'-deoxycytidine in DNA + S-adenosyl-L-methionine = an N(4)-methyl-2'-deoxycytidine in DNA + S-adenosyl-L-homocysteine + H(+). Functionally, a beta subtype methylase, recognizes the double-stranded sequence 5'-AGATCT-3', methylates C-5 on both strands, and protects the DNA from cleavage by the BglII endonuclease. The sequence is that of Type II methyltransferase M.BglII from Bacillus subtilis.